Here is a 509-residue protein sequence, read N- to C-terminus: Transmembrane protein 180 (509 aa).

Topologically, residues 1-10 are extracellular; it reads MGLRLLACLF. Residues 11–42 traverse the membrane as a helical segment; it reads HLPTAVIYGSLSLFVSILHNVFLLYYVDTFVS. Residues 43–54 are Cytoplasmic-facing; it reads VYKIDKLSFWIG. Residues 55-73 traverse the membrane as a helical segment; it reads ETVFLIWNSLNDPLFGWLS. The Extracellular portion of the chain corresponds to 74–98; that stretch reads DRVFLSTQQPGAEISSPEVVLKRLR. The chain crosses the membrane as a helical span at residues 99 to 116; it reads ALSHNGPLFAISFLAFWV. At 117-124 the chain is on the cytoplasmic side; that stretch reads AWAHPGLQ. A helical transmembrane segment spans residues 125 to 149; it reads FLLCLCMYDSFLTMVDLHHNALLAD. The Extracellular segment spans residues 150–153; that stretch reads LAVS. Residues 154 to 177 traverse the membrane as a helical segment; sequence AKDRTSLNFYCSFFSAIGSLSVFM. Residues 178 to 189 lie on the Cytoplasmic side of the membrane; the sequence is SYAVWNKEDFFS. Residues 190–221 traverse the membrane as a helical segment; the sequence is FRIFCIVLAFCSIVGFTLSTQLLRQRFETDGK. Topologically, residues 222–259 are extracellular; the sequence is AKWDQESTLKELYIEKLSVPQEKRITLVEYLQQLSRHR. A helical transmembrane segment spans residues 260 to 287; sequence NFLWFVCMNLIQVFHCHFNSNFFPLFLE. Topologically, residues 288-300 are cytoplasmic; that stretch reads HLLSDKISVSTGS. Residues 301–320 form a helical membrane-spanning segment; it reads FLLGISYIAPHLNNLYFLSL. The Extracellular segment spans residues 321–325; the sequence is CRRWG. The chain crosses the membrane as a helical span at residues 326–345; that stretch reads VYAVVRGLFFLKLALSVVML. The Cytoplasmic portion of the chain corresponds to 346 to 353; the sequence is LAGPDQVY. The helical transmembrane segment at 354–388 threads the bilayer; the sequence is LLCIFIASNRVFTEGTCKLLNLVVTDLVDEDLVLN. The Extracellular portion of the chain corresponds to 389–397; the sequence is RRKQAASAL. A helical membrane pass occupies residues 398-424; the sequence is LFGMVALVTKPGQTFAPLIGTWLLCVY. Topologically, residues 425–458 are cytoplasmic; that stretch reads TGYDIFQRNPLSNVVSAQPKLESDTILEPTLRQG. Residues 459–477 form a helical membrane-spanning segment; the sequence is CFYLLVFVPITCALLQLLS. Residues 478–509 are Extracellular-facing; that stretch reads WTQFSLHGKRLQMVKAQRQGLMQGRAPEIKMI.

It is found in the cell membrane. The chain is Transmembrane protein 180 from Gallus gallus (Chicken).